The primary structure comprises 164 residues: Zinc finger A20 and AN1 domain-containing stress-associated protein 1 (164 aa).

The A20-type zinc-finger motif lies at 16 to 50 (APEITLCANSCGFPGNPATQNLCQNCFLAATASTS). Zn(2+)-binding residues include Cys-22, Cys-26, Cys-38, and Cys-41. Over residues 48 to 58 (STSSPSSLSSP) the composition is skewed to low complexity. Residues 48-81 (STSSPSSLSSPVLDKQPPRPAAPLVEPQAPLPPP) are disordered. The AN1-type zinc finger occupies 99–145 (TSAVNRCSRCRKRVGLTGFRCRCGHLFCGEHRYSDRHGCSYDYKSAA). 8 residues coordinate Zn(2+): Cys-105, Cys-108, Cys-119, Cys-121, Cys-126, His-129, His-135, and Cys-137.

Functionally, may be involved in environmental stress response. The sequence is that of Zinc finger A20 and AN1 domain-containing stress-associated protein 1 (SAP1) from Oryza sativa subsp. indica (Rice).